A 373-amino-acid chain; its full sequence is MTVAQPLVLLAAGGTGGHLFPAEALALRLRERGIRVVLATDSRVETLSGEFPASEIVSIPSATPSGRSPLARGAALVTLGRGFAAALRVVRRLNPAVAVGFGGYPTVPPLLAAQMLRVPTLLHEQNAVMGRANAFLARGATVIATGVAQQVRGVPERARARRVHTGNPVRPAVLAAAATPYPPLAVEGPLQLLAFGGSQGARVMSEVVPEAVARLPAALRARLTVVQQARAEDLARAEALYGQAGLAAFSVAPFFKDLPARMAAAHLVVARSGASTVAELAVIGRPAILVPLPGSLDQDQAANAAVLGAAGAAFPRPQTDFTPERLAADLTGLFGAPERLIAAAAAAKGAGIPDAAERLAALVVETAIQASTR.

Residues 15–17, Asn126, Arg170, Ser198, and Gln300 each bind UDP-N-acetyl-alpha-D-glucosamine; that span reads TGG.

The protein belongs to the glycosyltransferase 28 family. MurG subfamily.

Its subcellular location is the cell inner membrane. The enzyme catalyses di-trans,octa-cis-undecaprenyl diphospho-N-acetyl-alpha-D-muramoyl-L-alanyl-D-glutamyl-meso-2,6-diaminopimeloyl-D-alanyl-D-alanine + UDP-N-acetyl-alpha-D-glucosamine = di-trans,octa-cis-undecaprenyl diphospho-[N-acetyl-alpha-D-glucosaminyl-(1-&gt;4)]-N-acetyl-alpha-D-muramoyl-L-alanyl-D-glutamyl-meso-2,6-diaminopimeloyl-D-alanyl-D-alanine + UDP + H(+). Its pathway is cell wall biogenesis; peptidoglycan biosynthesis. In terms of biological role, cell wall formation. Catalyzes the transfer of a GlcNAc subunit on undecaprenyl-pyrophosphoryl-MurNAc-pentapeptide (lipid intermediate I) to form undecaprenyl-pyrophosphoryl-MurNAc-(pentapeptide)GlcNAc (lipid intermediate II). In Methylobacterium nodulans (strain LMG 21967 / CNCM I-2342 / ORS 2060), this protein is UDP-N-acetylglucosamine--N-acetylmuramyl-(pentapeptide) pyrophosphoryl-undecaprenol N-acetylglucosamine transferase.